We begin with the raw amino-acid sequence, 128 residues long: MDGGLCFDSWSDYLGLSSLISRGLQPQREGERPRWDVLSPASAEPLPSNESVGHKGCGFCRSNREALSLYTSHRLRALDGRVLCPVLRGYTCPLCGANGDWAHTMRYCPLRRLLRDPQSNSNNPKLRH.

An essential for its translational repressor activity region spans residues 7 to 23; the sequence is FDSWSDYLGLSSLISRG. The interval 25–52 is disordered; the sequence is QPQREGERPRWDVLSPASAEPLPSNESV. The segment at 56–110 adopts a Nanos-type zinc-finger fold; sequence GCGFCRSNREALSLYTSHRLRALDGRVLCPVLRGYTCPLCGANGDWAHTMRYCPL. Residues cysteine 57, cysteine 60, histidine 73, cysteine 84, cysteine 92, cysteine 95, histidine 103, and cysteine 108 each contribute to the Zn(2+) site. Short sequence motifs (C2HC) lie at residues 57 to 84 and 92 to 108; these read CGFC…RVLC and CPLC…MRYC.

It belongs to the nanos family. In terms of assembly, interacts with ccnb1. Ovary and testis.

The protein resides in the cytoplasm. It is found in the perinuclear region. Functionally, acts as a translational repressor. Can mediate repression affecting different steps in the translation process: cap-driven, IRES-driven, polyadenylated RNAs or nonpolyadenylated RNAs. Essential for the development of primordial germ cells (PGCs) by ensuring their proper migration and survival. In Xenopus laevis (African clawed frog), this protein is Nanos homolog 1 (nanos1).